The primary structure comprises 447 residues: GTPase Der (447 aa).

2 consecutive EngA-type G domains span residues 3–167 and 181–354; these read PVIA…FAER and TRIA…AAAM. GTP-binding positions include 9-16, 56-60, 119-122, 187-194, 234-238, and 299-302; these read GRPNVGKS, DTGGF, NKAE, DTAGL, and NKWD. Residues 355–439 form the KH-like domain; that stretch reads VKLPTPKLTR…PLRIEFRTNK (85 aa).

This sequence belongs to the TRAFAC class TrmE-Era-EngA-EngB-Septin-like GTPase superfamily. EngA (Der) GTPase family. In terms of assembly, associates with the 50S ribosomal subunit.

In terms of biological role, GTPase that plays an essential role in the late steps of ribosome biogenesis. In Ralstonia pickettii (strain 12J), this protein is GTPase Der.